A 60-amino-acid chain; its full sequence is MSEIDAQKVAQRIDTVLDILVAGDYHSAIRNLEILKSELLDHTNAGNTADSAQPKAPWEV.

It belongs to the UPF0509 family.

This chain is UPF0509 protein Ent638_2183, found in Enterobacter sp. (strain 638).